We begin with the raw amino-acid sequence, 395 residues long: Acetate kinase (395 aa).

Mg(2+) is bound at residue Asn8. Lys15 is a binding site for ATP. Arg90 contributes to the substrate binding site. The active-site Proton donor/acceptor is Asp147. Residues 207–211, 284–286, and 330–334 contribute to the ATP site; these read HLGNG, DMR, and GIGEN. Glu383 is a binding site for Mg(2+).

This sequence belongs to the acetokinase family. As to quaternary structure, homodimer. Mg(2+) is required as a cofactor. Requires Mn(2+) as cofactor.

It is found in the cytoplasm. It catalyses the reaction acetate + ATP = acetyl phosphate + ADP. It participates in metabolic intermediate biosynthesis; acetyl-CoA biosynthesis; acetyl-CoA from acetate: step 1/2. Functionally, catalyzes the formation of acetyl phosphate from acetate and ATP. Can also catalyze the reverse reaction. The protein is Acetate kinase of Enterococcus faecalis (strain ATCC 700802 / V583).